Consider the following 288-residue polypeptide: uncharacterized protein (288 aa).

This is an uncharacterized protein from Acanthamoeba polyphaga mimivirus (APMV).